Consider the following 129-residue polypeptide: Cytochrome c oxidase subunit 5B, mitochondrial (129 aa).

The N-terminal 31 residues, 1-31 (MASRLLRGVGALASQALRARGPNGVSVVRSM), are a transit peptide targeting the mitochondrion. An N6-acetyllysine mark is found at Lys-68 and Lys-86. Zn(2+)-binding residues include Cys-91, Cys-93, Cys-113, and Cys-116. The residue at position 121 (Lys-121) is an N6-acetyllysine.

It belongs to the cytochrome c oxidase subunit 5B family. In terms of assembly, component of the cytochrome c oxidase (complex IV, CIV), a multisubunit enzyme composed of 14 subunits. The complex is composed of a catalytic core of 3 subunits MT-CO1, MT-CO2 and MT-CO3, encoded in the mitochondrial DNA, and 11 supernumerary subunits COX4I1 (or COX4I2), COX5A, COX5B, COX6A2 (or COX6A1), COX6B1 (or COX6B2), COX6C, COX7A1 (or COX7A2), COX7B, COX7C, COX8B and NDUFA4, which are encoded in the nuclear genome. The complex exists as a monomer or a dimer and forms supercomplexes (SCs) in the inner mitochondrial membrane with NADH-ubiquinone oxidoreductase (complex I, CI) and ubiquinol-cytochrome c oxidoreductase (cytochrome b-c1 complex, complex III, CIII), resulting in different assemblies (supercomplex SCI(1)III(2)IV(1) and megacomplex MCI(2)III(2)IV(2)).

Its subcellular location is the mitochondrion inner membrane. The protein operates within energy metabolism; oxidative phosphorylation. Component of the cytochrome c oxidase, the last enzyme in the mitochondrial electron transport chain which drives oxidative phosphorylation. The respiratory chain contains 3 multisubunit complexes succinate dehydrogenase (complex II, CII), ubiquinol-cytochrome c oxidoreductase (cytochrome b-c1 complex, complex III, CIII) and cytochrome c oxidase (complex IV, CIV), that cooperate to transfer electrons derived from NADH and succinate to molecular oxygen, creating an electrochemical gradient over the inner membrane that drives transmembrane transport and the ATP synthase. Cytochrome c oxidase is the component of the respiratory chain that catalyzes the reduction of oxygen to water. Electrons originating from reduced cytochrome c in the intermembrane space (IMS) are transferred via the dinuclear copper A center (CU(A)) of subunit 2 and heme A of subunit 1 to the active site in subunit 1, a binuclear center (BNC) formed by heme A3 and copper B (CU(B)). The BNC reduces molecular oxygen to 2 water molecules using 4 electrons from cytochrome c in the IMS and 4 protons from the mitochondrial matrix. The chain is Cytochrome c oxidase subunit 5B, mitochondrial (COX5B) from Bos taurus (Bovine).